A 256-amino-acid polypeptide reads, in one-letter code: Pimeloyl-[acyl-carrier protein] methyl ester esterase (256 aa).

The region spanning 15–242 (HLVLLHGWGL…AAHAPFISHP (228 aa)) is the AB hydrolase-1 domain. Residues Trp-22, 82 to 83 (SL), and 143 to 147 (FLALQ) each bind substrate. Ser-82 (nucleophile) is an active-site residue. Residues Asp-207 and His-235 contribute to the active site. His-235 provides a ligand contact to substrate.

Belongs to the AB hydrolase superfamily. Carboxylesterase BioH family. In terms of assembly, monomer.

It is found in the cytoplasm. It catalyses the reaction 6-carboxyhexanoyl-[ACP] methyl ester + H2O = 6-carboxyhexanoyl-[ACP] + methanol + H(+). Its pathway is cofactor biosynthesis; biotin biosynthesis. The physiological role of BioH is to remove the methyl group introduced by BioC when the pimeloyl moiety is complete. It allows to synthesize pimeloyl-ACP via the fatty acid synthetic pathway through the hydrolysis of the ester bonds of pimeloyl-ACP esters. The polypeptide is Pimeloyl-[acyl-carrier protein] methyl ester esterase (Escherichia coli (strain SMS-3-5 / SECEC)).